Reading from the N-terminus, the 123-residue chain is Putative iron-sulfur cluster insertion protein ErpA (123 aa).

Iron-sulfur cluster is bound by residues C51, C115, and C117.

The protein belongs to the HesB/IscA family. In terms of assembly, homodimer. It depends on iron-sulfur cluster as a cofactor.

Functionally, required for insertion of 4Fe-4S clusters. This chain is Putative iron-sulfur cluster insertion protein ErpA, found in Burkholderia cenocepacia (strain HI2424).